The chain runs to 20 residues: Collagenolytic protease 35 kDa 2 (20 aa).

A Peptidase S1 domain is found at 1-20 (IVGGTEVTPGEIPYQLSFQD). Positions 1–20 (IVGGTEVTPGEIPYQLSFQD) are disordered.

It belongs to the peptidase S1 family.

The catalysed reaction is Hydrolysis of proteins, with broad specificity for peptide bonds. Native collagen is cleaved about 75% of the length of the molecule from the N-terminus. Low activity on small molecule substrates of both trypsin and chymotrypsin.. This enzyme is a serine protease capable of degrading the native triple helix of collagen. This is Collagenolytic protease 35 kDa 2 from Chionoecetes opilio (Atlantic snow crab).